The chain runs to 969 residues: GATOR2 complex protein Wdr59 (969 aa).

A disordered region spans residues 1 to 24; it reads MPPTETLRPGERGTAGGPGAGAPE. WD repeat units lie at residues 127–167, 172–211, 215–255, 258–303, and 307–351; these read GHTR…KPAL, VCMSGATQVGFNRVSGNLLAAAHDGDLRIWDIRKGSCPTH, AHLN…RAEK, TTMS…DPIC, and GHTD…LKLC. Phosphothreonine is present on T373. Residues 435-538 enclose the RWD domain; sequence HEFSLLNTNM…RALVAAMKKK (104 aa). A C4-type zinc finger spans residues 891–911; it reads ECRKCAKPKRTPKCEPCKRPV. 13 residues coordinate Zn(2+): C892, C895, C904, C907, C917, C928, H933, H936, H939, C950, C953, C955, and C957. An RING-type; atypical zinc finger spans residues 912-960; it reads LFCVLCRLPVKGAANACLACGHGGHIDHMMQWFEKHNVCATCGCKCLER.

This sequence belongs to the WD repeat WDR59 family. As to quaternary structure, component of the GATOR complex consisting of mio, Nup44A/Seh1, Im11, Nplr3, Nplr2, Wdr24, Wdr59 and Sec13. Within the GATOR complex, probable component of the GATOR2 subcomplex which is likely composed of mio, Nup44A/Seh1, Wdr24, Wdr59 and Sec13. The GATOR2 complex associates with unmet in the absence of S-adenosyl-L-methionine; the mio-Wdr24-Nup44A subcomplex is essential and sufficient for this interaction while Wdr59 and Sec13 are dispensable. This association acts as a nutrient sensor to inhibit mTORC1 signaling in the absence of methionine.

It is found in the lysosome membrane. A component of the GATOR complex, which functions as a regulator of the amino acid-sensing branch of the mTORC1 signaling pathway. The two GATOR subcomplexes, GATOR1 and GATOR2, regulate the mTORC1 pathway in order to mediate metabolic homeostasis, female gametogenesis and the response to amino acid limitation and complete starvation. GATOR2 activates the mTORC1 signaling pathway through the inhibition of the GATOR1 subcomplex, controlling the switch to cell proliferation and growth under nutrient replete conditions and during female oocyte development. Acts as an atypical component of the GATOR2 subcomplex, which can either promote or inhibit mTORC1 signaling, depending on tissues: inhibits mTORC1 activity by preventing the activity of GATOR2 in the ovary and the eye imaginal disk brain, while it promotes mTORC1 activity in the fat body. In Drosophila melanogaster (Fruit fly), this protein is GATOR2 complex protein Wdr59.